We begin with the raw amino-acid sequence, 466 residues long: Ribulose bisphosphate carboxylase large chain (466 aa).

K5 is modified (N6,N6,N6-trimethyllysine). Residues N114 and T164 each coordinate substrate. The active-site Proton acceptor is K166. K168 is a binding site for substrate. Positions 192, 194, and 195 each coordinate Mg(2+). K192 bears the N6-carboxylysine mark. H285 (proton acceptor) is an active-site residue. Substrate-binding residues include R286, H318, and S370.

The protein belongs to the RuBisCO large chain family. Type I subfamily. Heterohexadecamer of 8 large chains and 8 small chains; disulfide-linked. The disulfide link is formed within the large subunit homodimers. It depends on Mg(2+) as a cofactor. In terms of processing, the disulfide bond which can form in the large chain dimeric partners within the hexadecamer appears to be associated with oxidative stress and protein turnover.

Its subcellular location is the plastid. It is found in the chloroplast. The catalysed reaction is 2 (2R)-3-phosphoglycerate + 2 H(+) = D-ribulose 1,5-bisphosphate + CO2 + H2O. It catalyses the reaction D-ribulose 1,5-bisphosphate + O2 = 2-phosphoglycolate + (2R)-3-phosphoglycerate + 2 H(+). RuBisCO catalyzes two reactions: the carboxylation of D-ribulose 1,5-bisphosphate, the primary event in carbon dioxide fixation, as well as the oxidative fragmentation of the pentose substrate in the photorespiration process. Both reactions occur simultaneously and in competition at the same active site. The polypeptide is Ribulose bisphosphate carboxylase large chain (Hedera helix (English ivy)).